The following is a 349-amino-acid chain: MSFLCSENSYQQQSKISIDIDKSLKNHKLKLEEEIRVLIYGQKKVGVTTLFKTFLLMGESQITPEELMDNRNNVYKTIINQLKKFIIISNNSKIELENNNNIQMSNLILELDSENFLWNKEIGETCLKLWNDSGIQKIFQSQFSEFFGYFFKHLQRISDENYTPTPQDLNFIKLTQNGIIEGKFTFERCLIKMIEMGIQTSTLKKWINCFSEVQAIIYVIDLSVYDIVESEDCSKSINKLEKSLNGFKEIIESKYLHGCGVIVFFNKKDIFREKLKTVPFKTYDKDYIGENDFESTTNFIKNKLLDYYSNPNKNVYFLINEESEVDICRSTFNILKDIVLNITYNSVKN.

The G-alpha domain occupies 33-349; the sequence is EEIRVLIYGQ…LNITYNSVKN (317 aa). The tract at residues 36–49 is G1 motif; sequence RVLIYGQKKVGVTT. A G2 motif region spans residues 168-176; sequence DLNFIKLTQ. Residues 191–200 form a G3 motif region; that stretch reads IKMIEMGIQT. Residues 195 to 199 and 266 to 269 contribute to the GTP site; these read EMGIQ and NKKD. The G4 motif stretch occupies residues 262–269; it reads IVFFNKKD. The interval 320–325 is G5 motif; the sequence is NEESEV.

It belongs to the G-alpha family.

This Dictyostelium discoideum (Social amoeba) protein is Guanine nucleotide-binding protein-like alpha-10 subunit (gpaJ).